The following is a 181-amino-acid chain: Translationally-controlled tumor protein homolog (181 aa).

The TCTP domain maps to 1-181; it reads MLIYKDIFTD…VKEAIIEEKC (181 aa).

Belongs to the TCTP family.

The protein localises to the cytoplasm. Its function is as follows. Involved in calcium binding and microtubule stabilization. The sequence is that of Translationally-controlled tumor protein homolog (tct-1) from Caenorhabditis elegans.